Reading from the N-terminus, the 81-residue chain is X antigen family member 1 (81 aa).

A Glycyl lysine isopeptide (Lys-Gly) (interchain with G-Cter in SUMO2) cross-link involves residue lysine 12. Phosphoserine is present on serine 20. Residues lysine 61 and lysine 65 each participate in a glycyl lysine isopeptide (Lys-Gly) (interchain with G-Cter in SUMO2) cross-link.

It belongs to the GAGE family. In normal tissues, highly expressed in testis. Expressed also in many different types of cancers: highly expressed in breast cancer, prostate cancer and many types of lung cancers, including squamous cell carcinoma, small cell carcinoma, non-small cell carcinoma, and adenocarcinoma, as well as in Ewing's cell lines, in some Ewing's sarcoma patient samples, and in one of one alveolar rhabdomyosarcoma patient sample.

The polypeptide is X antigen family member 1 (Homo sapiens (Human)).